A 208-amino-acid chain; its full sequence is Hypoxanthine-guanine phosphoribosyltransferase (208 aa).

Residues lysine 63, 122–130 (EDIVDSAIT), lysine 154, and aspartate 182 contribute to the GMP site. Aspartate 126 functions as the Proton acceptor in the catalytic mechanism. Aspartate 182 contacts Mg(2+).

Belongs to the purine/pyrimidine phosphoribosyltransferase family. Requires Mg(2+) as cofactor.

It localises to the cytoplasm. It catalyses the reaction IMP + diphosphate = hypoxanthine + 5-phospho-alpha-D-ribose 1-diphosphate. The enzyme catalyses GMP + diphosphate = guanine + 5-phospho-alpha-D-ribose 1-diphosphate. It participates in purine metabolism; IMP biosynthesis via salvage pathway; IMP from hypoxanthine: step 1/1. Converts guanine to guanosine monophosphate, and hypoxanthine to inosine monophosphate. Transfers the 5-phosphoribosyl group from 5-phosphoribosylpyrophosphate onto the purine. Plays a central role in the generation of purine nucleotides through the purine salvage pathway. The chain is Hypoxanthine-guanine phosphoribosyltransferase (HGPRT) from Crithidia fasciculata.